A 443-amino-acid chain; its full sequence is Histidinol dehydrogenase (443 aa).

The NAD(+) site is built by Y133, Q191, and N214. S240, Q262, and H265 together coordinate substrate. Zn(2+) contacts are provided by Q262 and H265. Active-site proton acceptor residues include E329 and H330. Substrate-binding residues include H330, D363, E417, and H422. D363 provides a ligand contact to Zn(2+). Position 422 (H422) interacts with Zn(2+).

This sequence belongs to the histidinol dehydrogenase family. In terms of assembly, homodimer. Zn(2+) is required as a cofactor.

It carries out the reaction L-histidinol + 2 NAD(+) + H2O = L-histidine + 2 NADH + 3 H(+). Its pathway is amino-acid biosynthesis; L-histidine biosynthesis; L-histidine from 5-phospho-alpha-D-ribose 1-diphosphate: step 9/9. Functionally, catalyzes the sequential NAD-dependent oxidations of L-histidinol to L-histidinaldehyde and then to L-histidine. This Yersinia pestis protein is Histidinol dehydrogenase.